Reading from the N-terminus, the 442-residue chain is MYLPQEIIRKKRDGEALTADEINFFIQGVANNTVSEGQIAAFAMTIFFNEMTMPERIALTCAMRDSGMVIDWSHMNFGGPIVDKHSTGGVGDVTSLMLGPMVAACGGFVPMISGRGLGHTGGTLDKLEAIPGYNITPSNDVFGQVTKEAGVAIIGQTGDLAPADKRVYATRDITATVDNISLITASILSKKLAAGLESLVMDVKVGSGAFMPTYEASEELAKSIVAVANGAGTKTTAILTDMNQVLASSAGNAVEVREAVRFLKGEYRNPRLLEVTMASCAEMLVLGKLAENTEDARAKLMEVLDNGKAAECFGKMVAGLGGPVDFMDNYDNYLDKAEIIKPVYAKETGVVSAMDTRAIGMAVVAMGGGRRVATDSIDYAVGFDQFIRLGEIASSEKPLAMIHARNEAQWQEAANALQAAIKVGGEYTPTPDVYRQIRQEDI.

It belongs to the thymidine/pyrimidine-nucleoside phosphorylase family. In terms of assembly, homodimer.

It carries out the reaction thymidine + phosphate = 2-deoxy-alpha-D-ribose 1-phosphate + thymine. It participates in pyrimidine metabolism; dTMP biosynthesis via salvage pathway; dTMP from thymine: step 1/2. The enzymes which catalyze the reversible phosphorolysis of pyrimidine nucleosides are involved in the degradation of these compounds and in their utilization as carbon and energy sources, or in the rescue of pyrimidine bases for nucleotide synthesis. In Vibrio vulnificus (strain CMCP6), this protein is Thymidine phosphorylase.